The primary structure comprises 208 residues: Large ribosomal subunit protein uL4 (208 aa).

Residues 58-77 (RGGGRKPWRQKGTGRARQGS) are disordered. Positions 60 to 71 (GGRKPWRQKGTG) are enriched in basic residues.

The protein belongs to the universal ribosomal protein uL4 family. Part of the 50S ribosomal subunit.

Its function is as follows. One of the primary rRNA binding proteins, this protein initially binds near the 5'-end of the 23S rRNA. It is important during the early stages of 50S assembly. It makes multiple contacts with different domains of the 23S rRNA in the assembled 50S subunit and ribosome. Functionally, forms part of the polypeptide exit tunnel. The sequence is that of Large ribosomal subunit protein uL4 from Caldicellulosiruptor saccharolyticus (strain ATCC 43494 / DSM 8903 / Tp8T 6331).